The primary structure comprises 335 residues: Methionyl-tRNA formyltransferase (335 aa).

Serine 122–proline 125 is a (6S)-5,6,7,8-tetrahydrofolate binding site. The tract at residues aspartate 203–arginine 222 is disordered.

Belongs to the Fmt family.

It catalyses the reaction L-methionyl-tRNA(fMet) + (6R)-10-formyltetrahydrofolate = N-formyl-L-methionyl-tRNA(fMet) + (6S)-5,6,7,8-tetrahydrofolate + H(+). In terms of biological role, attaches a formyl group to the free amino group of methionyl-tRNA(fMet). The formyl group appears to play a dual role in the initiator identity of N-formylmethionyl-tRNA by promoting its recognition by IF2 and preventing the misappropriation of this tRNA by the elongation apparatus. This is Methionyl-tRNA formyltransferase from Rhodopirellula baltica (strain DSM 10527 / NCIMB 13988 / SH1).